The chain runs to 241 residues: Glucosamine-6-phosphate deaminase (241 aa).

D67 acts as the Proton acceptor; for enolization step in catalysis. Residue N136 is the For ring-opening step of the active site. H138 functions as the Proton acceptor; for ring-opening step in the catalytic mechanism. The active-site For ring-opening step is E143.

The protein belongs to the glucosamine/galactosamine-6-phosphate isomerase family. NagB subfamily.

The catalysed reaction is alpha-D-glucosamine 6-phosphate + H2O = beta-D-fructose 6-phosphate + NH4(+). It participates in amino-sugar metabolism; N-acetylneuraminate degradation; D-fructose 6-phosphate from N-acetylneuraminate: step 5/5. Functionally, catalyzes the reversible isomerization-deamination of glucosamine 6-phosphate (GlcN6P) to form fructose 6-phosphate (Fru6P) and ammonium ion. The polypeptide is Glucosamine-6-phosphate deaminase (Clostridium tetani (strain Massachusetts / E88)).